The primary structure comprises 143 residues: Large ribosomal subunit protein uL15 (143 aa).

The segment at 1–59 (MELNGIKPSLGAKHAKRRVGRGIGSGLGKTAGRGHKGQKSRAGGYHKVGFEGGQMPMQR) is disordered. Gly residues predominate over residues 21-31 (RGIGSGLGKTA).

Belongs to the universal ribosomal protein uL15 family. In terms of assembly, part of the 50S ribosomal subunit.

Binds to the 23S rRNA. This chain is Large ribosomal subunit protein uL15, found in Polaromonas sp. (strain JS666 / ATCC BAA-500).